Reading from the N-terminus, the 349-residue chain is Fructose-1,6-bisphosphatase class 1 (349 aa).

Mg(2+)-binding residues include Glu-92, Asp-113, Leu-115, and Asp-116. Substrate contacts are provided by residues 116–119, Asn-209, Tyr-242, and Lys-272; that span reads DGSS. Glu-278 is a Mg(2+) binding site.

Belongs to the FBPase class 1 family. As to quaternary structure, homotetramer. The cofactor is Mg(2+).

Its subcellular location is the cytoplasm. It carries out the reaction beta-D-fructose 1,6-bisphosphate + H2O = beta-D-fructose 6-phosphate + phosphate. It participates in carbohydrate biosynthesis; Calvin cycle. The sequence is that of Fructose-1,6-bisphosphatase class 1 from Chloroherpeton thalassium (strain ATCC 35110 / GB-78).